The sequence spans 296 residues: Myozenin-1 (296 aa).

Ser82 is subject to Phosphoserine. Gly residues-rich tracts occupy residues 105-117 and 134-170; these read FSYG…GQAG and SGFG…QAGG. The tract at residues 105-172 is disordered; that stretch reads FSYGKGSSGG…GSGDQAGGDG (68 aa).

The protein belongs to the myozenin family. Interacts with ACTN2, ACTN3, FLNA, FLNB, FLNC, LDB3, PPP3CA and TCAP. Interacts via its C-terminal region with MYOT. As to expression, expressed primarily in skeletal muscle and specifically enriched in the gastrocnemius, which is composed predominantly of fast-twitch muscle fibers. Detected at lower levels in heart.

The protein localises to the nucleus. It is found in the cell projection. The protein resides in the pseudopodium. Its function is as follows. Myozenins may serve as intracellular binding proteins involved in linking Z-disk proteins such as alpha-actinin, gamma-filamin, TCAP/telethonin, LDB3/ZASP and localizing calcineurin signaling to the sarcomere. Plays an important role in the modulation of calcineurin signaling. May play a role in myofibrillogenesis. This is Myozenin-1 from Mus musculus (Mouse).